A 315-amino-acid chain; its full sequence is Malate dehydrogenase (315 aa).

NAD(+) is bound at residue 9–15; it reads GGSGNVG. Substrate is bound by residues Arg-84 and Arg-90. Residues Asn-97 and 120–122 each bind NAD(+); that span reads VSN. Asn-122 and Arg-153 together coordinate substrate. His-177 (proton acceptor) is an active-site residue.

This sequence belongs to the LDH/MDH superfamily.

It carries out the reaction (S)-malate + NAD(+) = oxaloacetate + NADH + H(+). In terms of biological role, catalyzes the reversible oxidation of malate to oxaloacetate. The protein is Malate dehydrogenase of Helicobacter hepaticus (strain ATCC 51449 / 3B1).